A 267-amino-acid polypeptide reads, in one-letter code: Glutamate racemase (267 aa).

Residues 9 to 10 (DS) and 41 to 42 (YS) contribute to the substrate site. The active-site Proton donor/acceptor is cysteine 73. 74 to 75 (NT) lines the substrate pocket. Cysteine 184 acts as the Proton donor/acceptor in catalysis. Residue 185-186 (TH) coordinates substrate.

The protein belongs to the aspartate/glutamate racemases family.

The catalysed reaction is L-glutamate = D-glutamate. Its pathway is cell wall biogenesis; peptidoglycan biosynthesis. Functionally, provides the (R)-glutamate required for cell wall biosynthesis. The protein is Glutamate racemase of Actinobacillus pleuropneumoniae serotype 7 (strain AP76).